A 206-amino-acid chain; its full sequence is LexA repressor (206 aa).

Residues 28-48 (RAEIATRLGFKSANAAEEHLK) constitute a DNA-binding region (H-T-H motif). Active-site for autocatalytic cleavage activity residues include Ser-123 and Lys-160.

This sequence belongs to the peptidase S24 family. Homodimer.

It carries out the reaction Hydrolysis of Ala-|-Gly bond in repressor LexA.. Functionally, represses a number of genes involved in the response to DNA damage (SOS response), including recA and lexA. In the presence of single-stranded DNA, RecA interacts with LexA causing an autocatalytic cleavage which disrupts the DNA-binding part of LexA, leading to derepression of the SOS regulon and eventually DNA repair. In Shewanella sp. (strain ANA-3), this protein is LexA repressor.